The chain runs to 78 residues: uncharacterized protein (78 aa).

This is an uncharacterized protein from Escherichia coli.